Consider the following 281-residue polypeptide: ATP phosphoribosyltransferase (281 aa).

This sequence belongs to the ATP phosphoribosyltransferase family. Long subfamily. The cofactor is Mg(2+).

It localises to the cytoplasm. The catalysed reaction is 1-(5-phospho-beta-D-ribosyl)-ATP + diphosphate = 5-phospho-alpha-D-ribose 1-diphosphate + ATP. It participates in amino-acid biosynthesis; L-histidine biosynthesis; L-histidine from 5-phospho-alpha-D-ribose 1-diphosphate: step 1/9. With respect to regulation, feedback inhibited by histidine. Functionally, catalyzes the condensation of ATP and 5-phosphoribose 1-diphosphate to form N'-(5'-phosphoribosyl)-ATP (PR-ATP). Has a crucial role in the pathway because the rate of histidine biosynthesis seems to be controlled primarily by regulation of HisG enzymatic activity. This chain is ATP phosphoribosyltransferase, found in Salinispora tropica (strain ATCC BAA-916 / DSM 44818 / JCM 13857 / NBRC 105044 / CNB-440).